A 924-amino-acid polypeptide reads, in one-letter code: Nodulation receptor kinase (924 aa).

An N-terminal signal peptide occupies residues Met1–Ser29. The stretch at Glu361–Ser382 forms a coiled coil. LRR repeat units follow at residues Val406 to Met428, Lys430 to Ser452, Leu453 to Leu475, and His477 to Asn498. Residues Phe520–Phe540 traverse the membrane as a helical segment. The Protein kinase domain maps to Glu595–Ile872. ATP contacts are provided by residues Ile601–Val609 and Lys623. Asp721 functions as the Proton acceptor in the catalytic mechanism.

This sequence belongs to the protein kinase superfamily. Ser/Thr protein kinase family. Post-translationally, may be phosphorylated.

It is found in the membrane. The catalysed reaction is L-seryl-[protein] + ATP = O-phospho-L-seryl-[protein] + ADP + H(+). It catalyses the reaction L-threonyl-[protein] + ATP = O-phospho-L-threonyl-[protein] + ADP + H(+). In terms of biological role, involved in the perception of symbiotic fungi and bacteria and required for the calcium spiking. Part of the perception/transduction system leading to nodulation or mycorrhizal infection. The chain is Nodulation receptor kinase (NORK) from Pisum sativum (Garden pea).